The sequence spans 228 residues: Cytokinin riboside 5'-monophosphate phosphoribohydrolase LOG5 (228 aa).

Substrate is bound by residues E79, 97 to 98 (RK), and 114 to 120 (GYGTLEE).

It belongs to the LOG family. Expressed in roots and shoots. Detected in vascular tissues of roots, cotyledons, and leaves, axillary buds, immature and mature flowers, fruit abscission zones and ovules.

It is found in the cytoplasm. The protein localises to the nucleus. The enzyme catalyses N(6)-(dimethylallyl)adenosine 5'-phosphate + H2O = N(6)-dimethylallyladenine + D-ribose 5-phosphate. The catalysed reaction is 9-ribosyl-trans-zeatin 5'-phosphate + H2O = trans-zeatin + D-ribose 5-phosphate. Cytokinin-activating enzyme working in the direct activation pathway. Phosphoribohydrolase that converts inactive cytokinin nucleotides to the biologically active free-base forms. This Arabidopsis thaliana (Mouse-ear cress) protein is Cytokinin riboside 5'-monophosphate phosphoribohydrolase LOG5 (LOG5).